A 212-amino-acid chain; its full sequence is Imidazole glycerol phosphate synthase subunit HisH (212 aa).

The region spanning 1-211 (MIGVIDYGMG…KQFTQEQKVK (211 aa)) is the Glutamine amidotransferase type-1 domain. Cys-79 functions as the Nucleophile in the catalytic mechanism. Catalysis depends on residues His-186 and Glu-188.

As to quaternary structure, heterodimer of HisH and HisF.

Its subcellular location is the cytoplasm. It catalyses the reaction 5-[(5-phospho-1-deoxy-D-ribulos-1-ylimino)methylamino]-1-(5-phospho-beta-D-ribosyl)imidazole-4-carboxamide + L-glutamine = D-erythro-1-(imidazol-4-yl)glycerol 3-phosphate + 5-amino-1-(5-phospho-beta-D-ribosyl)imidazole-4-carboxamide + L-glutamate + H(+). It carries out the reaction L-glutamine + H2O = L-glutamate + NH4(+). It participates in amino-acid biosynthesis; L-histidine biosynthesis; L-histidine from 5-phospho-alpha-D-ribose 1-diphosphate: step 5/9. Its function is as follows. IGPS catalyzes the conversion of PRFAR and glutamine to IGP, AICAR and glutamate. The HisH subunit catalyzes the hydrolysis of glutamine to glutamate and ammonia as part of the synthesis of IGP and AICAR. The resulting ammonia molecule is channeled to the active site of HisF. The protein is Imidazole glycerol phosphate synthase subunit HisH of Bacillus licheniformis (strain ATCC 14580 / DSM 13 / JCM 2505 / CCUG 7422 / NBRC 12200 / NCIMB 9375 / NCTC 10341 / NRRL NRS-1264 / Gibson 46).